A 355-amino-acid chain; its full sequence is Zinc finger protein CONSTANS-LIKE 5 (355 aa).

The Zn(2+) site is built by Cys-22, Cys-25, Cys-45, His-50, Cys-61, Cys-64, Cys-84, and His-89. A B box-type 1; atypical zinc finger spans residues 22–60; that stretch reads CDACKSVTAAVFCRVDSAFLCIACDTRIHSFTRHERVWV. The B box-type 2; atypical zinc finger occupies 61-103; sequence CEVCEQAPAAVTCKADAAALCVSCDADIHSANPLASRHERVPV. In terms of domain architecture, CCT spans 285–327; sequence REARVLRYREKRKNRKFEKTIRYASRKAYAESRPRIKGRFAKR.

It belongs to the CONSTANS family.

Its subcellular location is the nucleus. The chain is Zinc finger protein CONSTANS-LIKE 5 (COL5) from Arabidopsis thaliana (Mouse-ear cress).